A 152-amino-acid polypeptide reads, in one-letter code: B3 domain-containing protein At1g10455 (152 aa).

Positions 24-131 (LKKKLSDSDL…EVKFKHFKSQ (108 aa)) form a DNA-binding region, TF-B3.

It localises to the nucleus. The protein is B3 domain-containing protein At1g10455 of Arabidopsis thaliana (Mouse-ear cress).